The sequence spans 306 residues: Glutaminase (306 aa).

7 residues coordinate substrate: Ser61, Asn111, Glu157, Asn164, Tyr188, Tyr240, and Val258.

The protein belongs to the glutaminase family. In terms of assembly, homotetramer.

It carries out the reaction L-glutamine + H2O = L-glutamate + NH4(+). This chain is Glutaminase, found in Psychrobacter cryohalolentis (strain ATCC BAA-1226 / DSM 17306 / VKM B-2378 / K5).